Consider the following 438-residue polypeptide: MAPKKRNGFMTFVKEWQANNPVARGLSNSEAVAKCDPIWKSMGDQERGPYNSMAKNANVLERTAKKERLNCLGGSVAEMEIEKNEAISAELQMKRKIERIILTAKNSMELENEEFVFVSFNYFTKALTGDIYVPAEFSACRYSLKGGISSNYSTMINPGHIIYGQSRDAQDHSKTTHKLPLPPQAFGETNMGKLYIDIFNWLSVRNEEKLDQDPVIVYTTPELMPVVKSCFRYLASEAEIDEDERKIMVFDIHHLFYTLKKSVLDVAGVTNDRINFHVTNNFFVKDFFEYTEGISCDYHEKIDRSKYCTNSMVKRWGFTFSDYMCADLAIPLQPGKHIPLKVKPNYTITPASSSTNFDEISLDSYYSAPPRIQKEMGSRDLSPSSSHQSVSRAYVPRDHSVYGGTLDSDEEFPSLGGRRRQLPDKSHFNMGAGKKIAR.

Residues 2-69 (APKKRNGFMT…LERTAKKERL (68 aa)) constitute a DNA-binding region (HMG box). Positions 374–438 (KEMGSRDLSP…NMGAGKKIAR (65 aa)) are disordered. The span at 381–391 (LSPSSSHQSVS) shows a compositional bias: polar residues.

Belongs to the maelstrom family.

Its subcellular location is the cytoplasm. The protein resides in the nucleus. Its function is as follows. Involved both in the piRNA and miRNA metabolic processes. As a component of the meiotic nuage, plays a central role during oogenesis by repressing transposable elements and preventing their mobilization, which is essential for the germline integrity. Repression of transposable elements is mediated via the piRNA metabolic process, which mediates the repression of transposable elements during meiosis by forming complexes composed of piRNAs and Piwi proteins and governs the repression of transposons. As a nuclear component, it is required for proper differentiation in the germline stem cell (GSC) lineage by repressing microRNA-7 (miR-7), thereby acting as an indirect regulator of bag-of-marbles (Bam). Acts by binding to the promoter of miR-7 gene and repressing its expression; miR-7 repression alleviates the Bam repression by miR-7, thereby allowing differentiation in the germline stem cell (GSC) lineage. The protein is Protein maelstrom 2 (mael2) of Drosophila persimilis (Fruit fly).